A 286-amino-acid chain; its full sequence is MSKDILNRYLFDNADVRGQIVQLEKSYQEILSAHTYPEAIARLLGELMAATSLLTATLKFDGDISVQVQGNGPVSLAVINGNNLQQLRGVARWEGEVAKDASLQQLMGQGHMVITLTPNNGERYQGVVALEKETLAECLEQYFLQSEQLPTAIRLFANGKQAAGMLLQVLPGEDEHNEEFEHLEQLTSTIKAEELFELEATEVLHRLYHQEEVRLFDPIEVTFSCTCSRERSGQALKTVAKEELDAILAEQGKIEMGCEYCNSSYSFDSIDIEALFKNAPKADTQQ.

Disulfide bonds link C225/C227 and C258/C261.

It belongs to the HSP33 family. Under oxidizing conditions two disulfide bonds are formed involving the reactive cysteines. Under reducing conditions zinc is bound to the reactive cysteines and the protein is inactive.

Its subcellular location is the cytoplasm. In terms of biological role, redox regulated molecular chaperone. Protects both thermally unfolding and oxidatively damaged proteins from irreversible aggregation. Plays an important role in the bacterial defense system toward oxidative stress. In Shewanella loihica (strain ATCC BAA-1088 / PV-4), this protein is 33 kDa chaperonin.